The chain runs to 397 residues: MSDIIDSILSTLKKGRIFRSRDLLLPDYIPEALPHREDQIRKLVEILAPITRSEKPSNVFIYGLTGTGKTAVTRFVLSNLQRKFPSKFTFIYINTRQNDTPYRILADVLEALGIRVPFTGLSTAELFKRFVKRLNTFQTIVLITLDEIDALVKKHGDDILYRLTRINYDLSTSKVSVIGITNDVKMVENLDPRVKSSLGEEEIIFPPYNAEQLEDILKQRSKIALNEGVISEEVIKLCAALAARDHGDARRALDLLRVSGEIAEREGRDLITADDVNRARIELERDRVYEVISTLPFHSKLVLISIVLGLNSNSTLTTGEVYDIYIKLAGKLGVESITQRRVSDIINELDMVGIITARVVNRGRYGKTKEISLAVSKDIVIKSIKESDERIGSLWSR.

ATP contacts are provided by residues 67–71 (TGKTA), Y208, and R220.

It belongs to the CDC6/cdc18 family.

In terms of biological role, involved in regulation of DNA replication. The chain is ORC1-type DNA replication protein 1 (cdc6-1) from Sulfolobus acidocaldarius (strain ATCC 33909 / DSM 639 / JCM 8929 / NBRC 15157 / NCIMB 11770).